The following is an 860-amino-acid chain: Leucine--tRNA ligase (860 aa).

The 'HIGH' region motif lies at 42–52; that stretch reads PYPSGRLHMGH. The 'KMSKS' region signature appears at 619-623; that stretch reads KMSKS. Lys-622 contacts ATP.

The protein belongs to the class-I aminoacyl-tRNA synthetase family.

The protein localises to the cytoplasm. It carries out the reaction tRNA(Leu) + L-leucine + ATP = L-leucyl-tRNA(Leu) + AMP + diphosphate. The protein is Leucine--tRNA ligase of Salmonella paratyphi A (strain ATCC 9150 / SARB42).